The chain runs to 121 residues: uncharacterized protein (121 aa).

Residues 1–19 (MKKFALATIFALATTSAFA) form the signal peptide.

The protein to E.coli YgiW.

It is found in the periplasm. This is an uncharacterized protein from Haemophilus influenzae (strain ATCC 51907 / DSM 11121 / KW20 / Rd).